The following is a 652-amino-acid chain: Threonine--tRNA ligase (652 aa).

Residues 1–63 enclose the TGS domain; the sequence is MAEISLTFPD…TESGDFQLIT (63 aa). The segment at 246–545 is catalytic; sequence DHRVIGRDLD…LIEMYKGAFP (300 aa). Residues C340, H391, and H522 each coordinate Zn(2+).

Belongs to the class-II aminoacyl-tRNA synthetase family. As to quaternary structure, homodimer. It depends on Zn(2+) as a cofactor.

It is found in the cytoplasm. It catalyses the reaction tRNA(Thr) + L-threonine + ATP = L-threonyl-tRNA(Thr) + AMP + diphosphate + H(+). Its function is as follows. Catalyzes the attachment of threonine to tRNA(Thr) in a two-step reaction: L-threonine is first activated by ATP to form Thr-AMP and then transferred to the acceptor end of tRNA(Thr). Also edits incorrectly charged L-seryl-tRNA(Thr). The chain is Threonine--tRNA ligase from Leuconostoc mesenteroides subsp. mesenteroides (strain ATCC 8293 / DSM 20343 / BCRC 11652 / CCM 1803 / JCM 6124 / NCDO 523 / NBRC 100496 / NCIMB 8023 / NCTC 12954 / NRRL B-1118 / 37Y).